A 157-amino-acid polypeptide reads, in one-letter code: Mediator of RNA polymerase II transcription subunit 22 (157 aa).

The protein belongs to the Mediator complex subunit 22 family. As to quaternary structure, component of the Mediator complex.

The protein localises to the nucleus. Component of the Mediator complex, a coactivator involved in the regulated transcription of nearly all RNA polymerase II-dependent genes. Mediator functions as a bridge to convey information from gene-specific regulatory proteins to the basal RNA polymerase II transcription machinery. Mediator is recruited to promoters by direct interactions with regulatory proteins and serves as a scaffold for the assembly of a functional preinitiation complex with RNA polymerase II and the general transcription factors. The protein is Mediator of RNA polymerase II transcription subunit 22 (mdt-22) of Caenorhabditis elegans.